We begin with the raw amino-acid sequence, 340 residues long: Methionine import ATP-binding protein MetN (340 aa).

Positions 6–245 constitute an ABC transporter domain; sequence IEFEGITKVF…PQTNVAKRFV (240 aa). 42 to 49 is an ATP binding site; that stretch reads GYSGAGKS.

This sequence belongs to the ABC transporter superfamily. Methionine importer (TC 3.A.1.24) family. The complex is composed of two ATP-binding proteins (MetN), two transmembrane proteins (MetI) and a solute-binding protein (MetQ).

The protein resides in the cell membrane. The catalysed reaction is L-methionine(out) + ATP + H2O = L-methionine(in) + ADP + phosphate + H(+). It catalyses the reaction D-methionine(out) + ATP + H2O = D-methionine(in) + ADP + phosphate + H(+). In terms of biological role, part of the ABC transporter complex MetNIQ involved in methionine import. Responsible for energy coupling to the transport system. This chain is Methionine import ATP-binding protein MetN, found in Corynebacterium diphtheriae (strain ATCC 700971 / NCTC 13129 / Biotype gravis).